We begin with the raw amino-acid sequence, 126 residues long: Urease subunit beta (126 aa).

The protein belongs to the urease beta subunit family. As to quaternary structure, heterotrimer of UreA (gamma), UreB (beta) and UreC (alpha) subunits. Three heterotrimers associate to form the active enzyme.

It is found in the cytoplasm. The catalysed reaction is urea + 2 H2O + H(+) = hydrogencarbonate + 2 NH4(+). It participates in nitrogen metabolism; urea degradation; CO(2) and NH(3) from urea (urease route): step 1/1. This chain is Urease subunit beta, found in Gloeothece citriformis (strain PCC 7424) (Cyanothece sp. (strain PCC 7424)).